The primary structure comprises 602 residues: MKESGTFFLVVGPSGAGKDSLIDGARATLGNDEYVFARRIITRPSGSPGEDHESVAEAEFAERERNGEFLVTWHAHGLRYGLPQWLVGLLETGKHVVANGSRGVIAMLARQLPRFVVVNVTAPQDVLAQRIAARGRESGDDVMRRVARQAPPMPDGVHCVTVTNDSTLDLGVARFTDALRNGANAGSVPQPASRRHLAAKLDGQPLDEGAYEAILRDAIAGRYTAQELTAFLTAATRSLDDREVVALARARTRFTARIEWDEPIVVDKHSMGGIPGSRITLIVVPIVAAYGLAMPKTSSRAITSAAGTADAMETVARVDLTHDDVRRCVAQARACIAWNGRLNHSVIDDVMNAITRPLGLDSRRWAVASILSKKATAGATHVIVDIPYGPQTKLSARADADALAGLFEEVGKGLGLHVRALVTDGSRPIGRGVGPALEVRDVRQVLENHPDAPMDLREKALRFAGEIIAFDPRVASAAQGMRIATALLDEGSARAAFDRIVATQGIRPDPVAPGAHTHVIVAPAEGRVAAINGWQISGIARAAGAPRSAGAGIDLLCTIGERVAAGEPLYRIHAESAADLATAVAMTGPAGEASTAVRVDPD.

Positions 1–187 are ribose 1,5-bisphosphokinase; sequence MKESGTFFLV…ALRNGANAGS (187 aa). The tract at residues 188-602 is thymidinephosphorylase; it reads VPQPASRRHL…ASTAVRVDPD (415 aa).

The protein in the N-terminal section; belongs to the ribose 1,5-bisphosphokinase family. It in the C-terminal section; belongs to the thymidine/pyrimidine-nucleoside phosphorylase family. Type 2 subfamily.

The catalysed reaction is alpha-D-ribose 1,5-bisphosphate + ATP = 5-phospho-alpha-D-ribose 1-diphosphate + ADP. The enzyme catalyses thymidine + phosphate = 2-deoxy-alpha-D-ribose 1-phosphate + thymine. Its pathway is metabolic intermediate biosynthesis; 5-phospho-alpha-D-ribose 1-diphosphate biosynthesis; 5-phospho-alpha-D-ribose 1-diphosphate from D-ribose 5-phosphate (route II): step 3/3. Functionally, catalyzes the phosphorylation of ribose 1,5-bisphosphate to 5-phospho-D-ribosyl alpha-1-diphosphate (PRPP). The chain is Bifunctional ribose 1,5-bisphosphokinase-thymidine phosphorylase (phnN) from Cupriavidus pinatubonensis (strain JMP 134 / LMG 1197) (Cupriavidus necator (strain JMP 134)).